A 225-amino-acid polypeptide reads, in one-letter code: PKHD-type hydroxylase YbiX (225 aa).

The region spanning 78 to 177 (TLSTPLFNRY…RVASFMWIQS (100 aa)) is the Fe2OG dioxygenase domain. Residues His96, Asp98, and His158 each coordinate Fe cation. Arg168 serves as a coordination point for 2-oxoglutarate.

Fe(2+) serves as cofactor. It depends on L-ascorbate as a cofactor.

The sequence is that of PKHD-type hydroxylase YbiX from Escherichia coli (strain 55989 / EAEC).